Consider the following 305-residue polypeptide: UDP-3-O-acyl-N-acetylglucosamine deacetylase (305 aa).

Zn(2+) contacts are provided by His79, His238, and Asp242. Catalysis depends on His265, which acts as the Proton donor.

The protein belongs to the LpxC family. It depends on Zn(2+) as a cofactor.

It carries out the reaction a UDP-3-O-[(3R)-3-hydroxyacyl]-N-acetyl-alpha-D-glucosamine + H2O = a UDP-3-O-[(3R)-3-hydroxyacyl]-alpha-D-glucosamine + acetate. It participates in glycolipid biosynthesis; lipid IV(A) biosynthesis; lipid IV(A) from (3R)-3-hydroxytetradecanoyl-[acyl-carrier-protein] and UDP-N-acetyl-alpha-D-glucosamine: step 2/6. Catalyzes the hydrolysis of UDP-3-O-myristoyl-N-acetylglucosamine to form UDP-3-O-myristoylglucosamine and acetate, the committed step in lipid A biosynthesis. The sequence is that of UDP-3-O-acyl-N-acetylglucosamine deacetylase from Salmonella agona (strain SL483).